We begin with the raw amino-acid sequence, 334 residues long: Glyoxylate reductase (334 aa).

Residues 158–161 (FGRI), 180–182 (SRT), and 239–241 (IAR) contribute to the NADP(+) site. Catalysis depends on residues arginine 241 and glutamate 270. Histidine 288 acts as the Proton donor in catalysis. 288–290 (HIG) contacts NADP(+).

It belongs to the D-isomer specific 2-hydroxyacid dehydrogenase family. GyaR subfamily. Homodimer.

It is found in the cytoplasm. It catalyses the reaction glycolate + NAD(+) = glyoxylate + NADH + H(+). The sequence is that of Glyoxylate reductase from Thermococcus onnurineus (strain NA1).